Here is a 347-residue protein sequence, read N- to C-terminus: Protein RecA (347 aa).

68–75 (GPESSGKT) is an ATP binding site.

The protein belongs to the RecA family.

Its subcellular location is the cytoplasm. Its function is as follows. Can catalyze the hydrolysis of ATP in the presence of single-stranded DNA, the ATP-dependent uptake of single-stranded DNA by duplex DNA, and the ATP-dependent hybridization of homologous single-stranded DNAs. It interacts with LexA causing its activation and leading to its autocatalytic cleavage. In Rhodococcus jostii (strain RHA1), this protein is Protein RecA.